A 530-amino-acid polypeptide reads, in one-letter code: MSENIKPSEVSEVLLQQLKGIDTHLQFDEVGNVLQVSDGVARIYGLRNAEANELLEFENGIMAIVMNLEEDNVGAVLLGPTDQIKEGMVVKRTKRIASINVGEGMLGRVIDPLGVPLDGRGQIGGELCEMPLERKAPGVIFRQPVNQPLQTGLKSVDAMIPIGRGQRELIIGDRQTGKTSIAIDTILNQKSNYEAGKPVYCIYVAIGQKGSTVASLVNTLRERGAMDYTIVVAATAADPAALQYFAPFAGAAIGEYFRDTGRDALVVYDDLSKQAVAYREVSLILRRPSGREAYPGDIFYLHSRLLERAAKIINQQEVAEQMNDLPPSLKGKVKAGGSLTALPIIETQAGDVSAYIPTNVISITDGQIFLETDLFNQGFRPAINVGISVSRVGGSAQIKSMKKVAGTLKIDQAQYRELEAFSKFSSDMDPVTAMAIDRGRKNNQLLIQPQYSPMPVGEQIAILYCGTHSLLRDVPLHKVQDFQKSFLEMMRADHQKDVLDVLSSGVINDDVTAIIEKVAADTAQPFKVNE.

ATP is bound at residue 172 to 179; the sequence is GDRQTGKT.

The protein belongs to the ATPase alpha/beta chains family. In terms of assembly, F-type ATPases have 2 components, CF(1) - the catalytic core - and CF(0) - the membrane proton channel. CF(1) has five subunits: alpha(3), beta(3), gamma(1), delta(1), epsilon(1). CF(0) has three main subunits: a(1), b(2) and c(9-12). The alpha and beta chains form an alternating ring which encloses part of the gamma chain. CF(1) is attached to CF(0) by a central stalk formed by the gamma and epsilon chains, while a peripheral stalk is formed by the delta and b chains.

The protein resides in the cell inner membrane. The enzyme catalyses ATP + H2O + 4 H(+)(in) = ADP + phosphate + 5 H(+)(out). Functionally, produces ATP from ADP in the presence of a proton gradient across the membrane. The alpha chain is a regulatory subunit. The sequence is that of ATP synthase subunit alpha from Phocaeicola vulgatus (strain ATCC 8482 / DSM 1447 / JCM 5826 / CCUG 4940 / NBRC 14291 / NCTC 11154) (Bacteroides vulgatus).